Reading from the N-terminus, the 268-residue chain is Ubiquinone biosynthesis protein COQ4 homolog, mitochondrial (268 aa).

His-171, Asp-172, His-175, and Glu-187 together coordinate Zn(2+).

This sequence belongs to the COQ4 family. In terms of assembly, component of a multi-subunit COQ enzyme complex. Zn(2+) is required as a cofactor.

It is found in the mitochondrion inner membrane. The enzyme catalyses a 4-hydroxy-3-methoxy-5-(all-trans-polyprenyl)benzoate + H(+) = a 2-methoxy-6-(all-trans-polyprenyl)phenol + CO2. Its pathway is cofactor biosynthesis; ubiquinone biosynthesis. Its function is as follows. Lyase that catalyzes the C1-decarboxylation of 4-hydroxy-3-methoxy-5-(all-trans-polyprenyl)benzoic acid into 2-methoxy-6-(all-trans-polyprenyl)phenol during ubiquinone biosynthesis. In Drosophila sechellia (Fruit fly), this protein is Ubiquinone biosynthesis protein COQ4 homolog, mitochondrial.